A 1149-amino-acid chain; its full sequence is MGIRFIYGRAGTGKTYFCLREIKEKINDGNSHPLILLVPEQFTFEAEKYLLETVEKDRKMRAQVLSFKTLANRVFTEVGGLTRQHVNSCGRSMVIYKIMEDLKENLKVYYKASRQQGFIKKISEVITEFKRFEVTPEKLMDTAESIQKEGLREKLRELSLIYGKFDELLHQKYIDEEDALTLLAEKLEYSEQFKGAEFWIDGFTGFTPKQYKVLEKLLKKAARVSVTLTMDTSKDSIDNTDLFYTTKKTEDKLLKICYENNISYEKPVDLNEGVPKRFEKNEEMAFLEKHLFSYPYKIYSKDTKNISLFKAVNVYSEVEETAREIIRLVRDENLRYSDIVVTARDLKRYHKLIKTIFSHYGIPHFIDLKLDIKNNPIIVYITSLFEIYLKNWSYESVFRHLKTGFTNLNKEDISFLENYVLANGIKGGKWKEEWKYSFRNRLDKLFDDQDEKEALEKVNTIKNGISEPLNKFYKDFSNANTVREACEILYNFLVERDIPQRIENLIREFKENKEFEIANQYSQIWDIVVDVLDQMVEVMGEEKINIDLFSKILDIGFEAYQIGSIPPALDEVLVTSVDRMKSHNAKALFVIGANDGIFPASSFEEGILTDEDRQILTSYEVELDRDTKAKVFEEQFLVYTALTSTSKFLRISYPIADHEGRSLRPSIIISRFKRIFPQITQFSNVIEMDTDEENLHRVSSPDPTFNEMIKSFKEWDIKDKINSLWLDVYNWYSNKEVWRKRIEKVLEGFNYSNQVRVIPSAKIKRLYKDEINFSVSRLEKYAACPFAYFVQYGLKAKERKIYSFDPPDLGIFMHNVLNEVSKALEKEDKTWEDLDREYCDEVVNIVVDNMLKGVSEHILKSSPRYEYLSKRLTRVLSNAVWVISEHIKRSSFIPSGHEVAFGENQMYPPIKIILSNGEEINLIGRIDRVDVFEKGEESYIRIIDYKSGNKELKLEDVFYGLELQLLIYLDAILESADKENTDIKPAGIFYFRIDDPIVKADKDITDEELQKEILKKLRLDGLVLKDAEIIKEMDKSINGTSYIIPASINKDGTIGKKTKGATKEQFELLRKHVKNMIKDLAEQMINGNISITPYRKGKETACKYCPYSSVCKFETNFEGNKYMFIKEQKEEEIWNMLQKEVNKDGDKVD.

8–15 (GRAGTGKT) provides a ligand contact to ATP. [4Fe-4S] cluster-binding residues include Cys784, Cys1102, Cys1105, and Cys1111.

Belongs to the helicase family. AddB/RexB type 1 subfamily. Heterodimer of AddA and AddB. Requires Mg(2+) as cofactor. It depends on [4Fe-4S] cluster as a cofactor.

Its function is as follows. The heterodimer acts as both an ATP-dependent DNA helicase and an ATP-dependent, dual-direction single-stranded exonuclease. Recognizes the chi site generating a DNA molecule suitable for the initiation of homologous recombination. The AddB subunit has 5' -&gt; 3' nuclease activity but not helicase activity. This Thermoanaerobacter pseudethanolicus (strain ATCC 33223 / 39E) (Clostridium thermohydrosulfuricum) protein is ATP-dependent helicase/deoxyribonuclease subunit B.